The following is a 141-amino-acid chain: Putative pre-16S rRNA nuclease (141 aa).

The protein belongs to the YqgF nuclease family.

The protein localises to the cytoplasm. Functionally, could be a nuclease involved in processing of the 5'-end of pre-16S rRNA. The protein is Putative pre-16S rRNA nuclease of Coxiella burnetii (strain CbuK_Q154) (Coxiella burnetii (strain Q154)).